The chain runs to 744 residues: Cullin-3 (744 aa).

A Cullin neddylation domain is found at 677–736 (MELSAIIVRIMKTEGKLSHQQLLERTTKRTQSRLSLTPSILKRSIQLLIEKEYIQRNADD). A Glycyl lysine isopeptide (Lys-Gly) (interchain with G-Cter in NEDD8) cross-link involves residue Lys-688.

This sequence belongs to the cullin family. As to quaternary structure, component of a ubiquitin-protein ligase complex consisting of the cullin CUL3, the linker protein ELC1, the substrate receptor ELA1, and the RING protein HRT1. Post-translationally, neddylated; enhancing the ubiquitin-ligase activity.

Its pathway is protein modification; protein ubiquitination. Its function is as follows. As part of the CRL3 E3 ubiquitin ligase complex; polyubiquitylates monoubiquitylated RNA polymerase II subunit RPO21 to trigger its proteolysis; plays a role in global genomic repair. This chain is Cullin-3 (CUL3), found in Saccharomyces cerevisiae (strain ATCC 204508 / S288c) (Baker's yeast).